We begin with the raw amino-acid sequence, 251 residues long: Adenylate kinase (251 aa).

46 to 51 (GAGKGT) is an ATP binding site. The interval 66 to 95 (ATGDMLRSQVQQQTPLGVEAKKIMDAGGLV) is NMP. AMP contacts are provided by residues threonine 67, arginine 72, 93 to 95 (GLV), 122 to 125 (GFPR), and glutamine 129. The LID stretch occupies residues 163–200 (GRLVHPASGRSYHKVFNPPKKEMIDDITGEALVQRSDD). ATP contacts are provided by residues arginine 164 and 173 to 174 (SY). Residues arginine 197 and arginine 208 each contribute to the AMP site. Glutamine 236 lines the ATP pocket.

Belongs to the adenylate kinase family. AK2 subfamily. In terms of assembly, monomer.

The protein localises to the cytoplasm. It localises to the cytosol. The protein resides in the mitochondrion intermembrane space. The enzyme catalyses AMP + ATP = 2 ADP. Functionally, catalyzes the reversible transfer of the terminal phosphate group between ATP and AMP. Plays an important role in cellular energy homeostasis and in adenine nucleotide metabolism. Adenylate kinase activity is critical for regulation of the phosphate utilization and the AMP de novo biosynthesis pathways. This Yarrowia lipolytica (strain CLIB 122 / E 150) (Yeast) protein is Adenylate kinase.